Here is a 173-residue protein sequence, read N- to C-terminus: Insertion element IS1397 uncharacterized 20.1 kDa protein (173 aa).

Positions Lys115–Met135 are disordered.

It belongs to the IS150/IS1296 orfA family.

The sequence is that of Insertion element IS1397 uncharacterized 20.1 kDa protein from Escherichia coli.